We begin with the raw amino-acid sequence, 150 residues long: 1,4-dihydroxy-2-naphthoyl-CoA hydrolase (150 aa).

Asp19 is an active-site residue.

It belongs to the 4-hydroxybenzoyl-CoA thioesterase family. DHNA-CoA hydrolase subfamily.

The enzyme catalyses 1,4-dihydroxy-2-naphthoyl-CoA + H2O = 1,4-dihydroxy-2-naphthoate + CoA + H(+). It functions in the pathway cofactor biosynthesis; phylloquinone biosynthesis. Its pathway is quinol/quinone metabolism; 1,4-dihydroxy-2-naphthoate biosynthesis; 1,4-dihydroxy-2-naphthoate from chorismate: step 7/7. Its function is as follows. Catalyzes the hydrolysis of 1,4-dihydroxy-2-naphthoyl-CoA (DHNA-CoA) to 1,4-dihydroxy-2-naphthoate (DHNA), a reaction involved in phylloquinone (vitamin K1) biosynthesis. The sequence is that of 1,4-dihydroxy-2-naphthoyl-CoA hydrolase from Prochlorococcus marinus subsp. pastoris (strain CCMP1986 / NIES-2087 / MED4).